A 296-amino-acid chain; its full sequence is GTPase Era (296 aa).

In terms of domain architecture, Era-type G spans Lys2 to Asp171. The interval Gly10–Ser17 is G1. Gly10–Ser17 lines the GTP pocket. The segment at Gly36–Asp40 is G2. The segment at Asp57–Gly60 is G3. GTP-binding positions include Asp57 to Ile61 and Asn120 to Asp123. The segment at Asn120–Asp123 is G4. A G5 region spans residues Ala150–Gly152. One can recognise a KH type-2 domain in the interval Thr202 to Asp279.

Belongs to the TRAFAC class TrmE-Era-EngA-EngB-Septin-like GTPase superfamily. Era GTPase family. In terms of assembly, monomer.

It is found in the cytoplasm. The protein localises to the cell inner membrane. An essential GTPase that binds both GDP and GTP, with rapid nucleotide exchange. Plays a role in 16S rRNA processing and 30S ribosomal subunit biogenesis and possibly also in cell cycle regulation and energy metabolism. This Fusobacterium nucleatum subsp. nucleatum (strain ATCC 25586 / DSM 15643 / BCRC 10681 / CIP 101130 / JCM 8532 / KCTC 2640 / LMG 13131 / VPI 4355) protein is GTPase Era.